Here is a 512-residue protein sequence, read N- to C-terminus: Sucrose-6-phosphate hydrolase (512 aa).

Substrate is bound by residues Trp40–Asp43, Gln59, Trp67, Phe102–Ser103, Arg165–Asp166, Glu229, and Trp311. Asp43 is an active-site residue.

This sequence belongs to the glycosyl hydrolase 32 family.

It is found in the cytoplasm. The enzyme catalyses Hydrolysis of terminal non-reducing beta-D-fructofuranoside residues in beta-D-fructofuranosides.. It functions in the pathway glycan biosynthesis; sucrose metabolism. This Zymomonas mobilis subsp. mobilis (strain ATCC 10988 / DSM 424 / LMG 404 / NCIMB 8938 / NRRL B-806 / ZM1) protein is Sucrose-6-phosphate hydrolase (sacA).